The sequence spans 115 residues: MNMMLAMLINITLSLCLISLAFWLPQLNLYSEKASPYECGFDPMSSARLPFSMKFFLVGITFLLLDLEIALLLPLPWAIQSTNMITTTIVSLSLVSILALGLSYEWMNKGLEWTE.

The next 3 membrane-spanning stretches (helical) occupy residues 4-24 (MLAM…AFWL), 55-75 (FFLV…LLPL), and 84-104 (MITT…GLSY).

It belongs to the complex I subunit 3 family. In terms of assembly, core subunit of respiratory chain NADH dehydrogenase (Complex I) which is composed of 45 different subunits. Interacts with TMEM186. Interacts with TMEM242.

It localises to the mitochondrion inner membrane. It carries out the reaction a ubiquinone + NADH + 5 H(+)(in) = a ubiquinol + NAD(+) + 4 H(+)(out). Its function is as follows. Core subunit of the mitochondrial membrane respiratory chain NADH dehydrogenase (Complex I) which catalyzes electron transfer from NADH through the respiratory chain, using ubiquinone as an electron acceptor. Essential for the catalytic activity of complex I. This chain is NADH-ubiquinone oxidoreductase chain 3, found in Reithrodon auritus (Bunny rat).